Consider the following 277-residue polypeptide: Nudix hydrolase 10 (277 aa).

The region spanning tryptophan 97–histidine 235 is the Nudix hydrolase domain. The short motif at glycine 142–glycine 163 is the Nudix box element. Residues glutamate 157 and glutamate 161 each contribute to the Mg(2+) site.

The protein belongs to the Nudix hydrolase family. It depends on Mg(2+) as a cofactor. Mn(2+) is required as a cofactor. Expressed in roots, stems and, at lower level, leaves.

The catalysed reaction is ADP-D-ribose + H2O = D-ribose 5-phosphate + AMP + 2 H(+). It catalyses the reaction NAD(+) + H2O = beta-nicotinamide D-ribonucleotide + AMP + 2 H(+). The enzyme catalyses NADH + H2O = reduced beta-nicotinamide D-ribonucleotide + AMP + 2 H(+). In terms of biological role, may mediate the hydrolysis of some nucleoside diphosphate derivatives. In vitro, uses both ADP-ribose and NADH as substrates; however the relevance of such substrates in vivo is unclear. The chain is Nudix hydrolase 10 (NUDT10) from Arabidopsis thaliana (Mouse-ear cress).